The following is a 354-amino-acid chain: Fe(3+) ions import ATP-binding protein FbpC (354 aa).

The region spanning 4-236 is the ABC transporter domain; that stretch reads LELHAVHKSF…PRDAQTALFL (233 aa). 36 to 43 lines the ATP pocket; sequence GPSGSGKT.

It belongs to the ABC transporter superfamily. Fe(3+) ion importer (TC 3.A.1.10) family. As to quaternary structure, the complex is composed of two ATP-binding proteins (FbpC), two transmembrane proteins (FbpB) and a solute-binding protein (FbpA).

The protein resides in the cell inner membrane. The enzyme catalyses Fe(3+)(out) + ATP + H2O = Fe(3+)(in) + ADP + phosphate + H(+). Functionally, part of the ABC transporter complex FbpABC involved in Fe(3+) ions import. Responsible for energy coupling to the transport system. This chain is Fe(3+) ions import ATP-binding protein FbpC, found in Pseudomonas fluorescens (strain ATCC BAA-477 / NRRL B-23932 / Pf-5).